The chain runs to 209 residues: Large ribosomal subunit protein uL3 (209 aa).

Belongs to the universal ribosomal protein uL3 family. As to quaternary structure, part of the 50S ribosomal subunit. Forms a cluster with proteins L14 and L19.

Functionally, one of the primary rRNA binding proteins, it binds directly near the 3'-end of the 23S rRNA, where it nucleates assembly of the 50S subunit. In Nitratidesulfovibrio vulgaris (strain DSM 19637 / Miyazaki F) (Desulfovibrio vulgaris), this protein is Large ribosomal subunit protein uL3.